The primary structure comprises 213 residues: Serine acetyltransferase (213 aa).

This sequence belongs to the transferase hexapeptide repeat family.

The protein resides in the cytoplasm. It catalyses the reaction L-serine + acetyl-CoA = O-acetyl-L-serine + CoA. Its pathway is amino-acid biosynthesis; L-cysteine biosynthesis; L-cysteine from L-serine: step 1/2. This is Serine acetyltransferase (cysE) from Staphylococcus epidermidis (strain ATCC 35984 / DSM 28319 / BCRC 17069 / CCUG 31568 / BM 3577 / RP62A).